A 143-amino-acid polypeptide reads, in one-letter code: MAAPRRGKASSTVLSSLPLQMLLCLSGTYYALYFLATLLLLVYKSQVFTYPHSCLVLDLTLLFLMGILEAIRLYFGTTGNLMEAEVPLAASLVLTVGSALLSAYFLLWQTLVLRADSALGAPLLALHGLEAVLQVVAIAAFVS.

4 consecutive transmembrane segments (helical) span residues 22–42 (LLCL…LLLV), 47–67 (VFTY…LMGI), 88–108 (LAAS…FLLW), and 122–142 (PLLA…AAFV).

The protein localises to the membrane. It localises to the cell projection. The protein resides in the cilium. This chain is Transmembrane protein 80 (TMEM80), found in Bos taurus (Bovine).